A 405-amino-acid chain; its full sequence is 4-hydroxy-3-methylbut-2-en-1-yl diphosphate synthase (flavodoxin) (405 aa).

Positions 297, 300, 343, and 350 each coordinate [4Fe-4S] cluster.

This sequence belongs to the IspG family. [4Fe-4S] cluster is required as a cofactor.

It carries out the reaction (2E)-4-hydroxy-3-methylbut-2-enyl diphosphate + oxidized [flavodoxin] + H2O + 2 H(+) = 2-C-methyl-D-erythritol 2,4-cyclic diphosphate + reduced [flavodoxin]. It participates in isoprenoid biosynthesis; isopentenyl diphosphate biosynthesis via DXP pathway; isopentenyl diphosphate from 1-deoxy-D-xylulose 5-phosphate: step 5/6. Functionally, converts 2C-methyl-D-erythritol 2,4-cyclodiphosphate (ME-2,4cPP) into 1-hydroxy-2-methyl-2-(E)-butenyl 4-diphosphate. This is 4-hydroxy-3-methylbut-2-en-1-yl diphosphate synthase (flavodoxin) from Francisella tularensis subsp. novicida (strain U112).